The chain runs to 251 residues: Methionine aminopeptidase (251 aa).

Residue histidine 76 participates in substrate binding. Residues aspartate 93, aspartate 104, and histidine 168 each coordinate a divalent metal cation. A substrate-binding site is contributed by histidine 175. Residues glutamate 202 and glutamate 233 each contribute to the a divalent metal cation site.

This sequence belongs to the peptidase M24A family. Methionine aminopeptidase type 1 subfamily. In terms of assembly, monomer. Co(2+) is required as a cofactor. The cofactor is Zn(2+). Requires Mn(2+) as cofactor. It depends on Fe(2+) as a cofactor.

The catalysed reaction is Release of N-terminal amino acids, preferentially methionine, from peptides and arylamides.. Removes the N-terminal methionine from nascent proteins. The N-terminal methionine is often cleaved when the second residue in the primary sequence is small and uncharged (Met-Ala-, Cys, Gly, Pro, Ser, Thr, or Val). Requires deformylation of the N(alpha)-formylated initiator methionine before it can be hydrolyzed. This chain is Methionine aminopeptidase, found in Staphylococcus epidermidis (strain ATCC 35984 / DSM 28319 / BCRC 17069 / CCUG 31568 / BM 3577 / RP62A).